Here is a 340-residue protein sequence, read N- to C-terminus: Major histocompatibility complex class I-related gene protein (340 aa).

Positions 1–22 (MGELMAFLLPLIIVLMVKHSNS) are cleaved as a signal peptide. Residues 23–109 (RTHSLRYFRL…KRLQRHYNHS (87 aa)) are alpha-1. Residues 23-201 (RTHSLRYFRL…EYGKDTLQRT (179 aa)) form an antigen-binding cleft region. Topologically, residues 23-302 (RTHSLRYFRL…QESEAIPLVM (280 aa)) are extracellular. Residues Tyr-29 and Arg-31 each coordinate 8-(9H-purin-6-yl)-2-oxa-8-azabicyclo[3.3.1]nona-3,6-diene-4,6-dicarbaldehyde. The 5-(2-oxoethylideneamino)-6-(D-ribitylamino)uracil site is built by Arg-31, Ser-46, and Lys-65. 5-(2-oxopropylideneamino)-6-(D-ribitylamino)uracil-binding residues include Arg-31, Ser-46, and Lys-65. The 7-hydroxy-6-methyl-8-(1-D-ribityl)lumazine site is built by Arg-31, Ser-46, and Lys-65. 2 residues coordinate 8-(9H-purin-6-yl)-2-oxa-8-azabicyclo[3.3.1]nona-3,6-diene-4,6-dicarbaldehyde: Lys-65 and His-80. Lys-65 contributes to the 2-amino-4-oxopteridine-6-carbaldehyde binding site. Lys-65 provides a ligand contact to pyridoxal. Asn-107 is a glycosylation site (N-linked (GlcNAc...) asparagine). The alpha-2 stretch occupies residues 110–201 (GSHTYQRMIG…EYGKDTLQRT (92 aa)). An 8-(9H-purin-6-yl)-2-oxa-8-azabicyclo[3.3.1]nona-3,6-diene-4,6-dicarbaldehyde-binding site is contributed by Arg-116. Residues Arg-116, Tyr-174, and Gln-175 each contribute to the 5-(2-oxoethylideneamino)-6-(D-ribitylamino)uracil site. Arg-116, Tyr-174, and Gln-175 together coordinate 5-(2-oxopropylideneamino)-6-(D-ribitylamino)uracil. 7-hydroxy-6-methyl-8-(1-D-ribityl)lumazine-binding residues include Arg-116, Tyr-174, and Gln-175. Disulfide bonds link Cys-120/Cys-183 and Cys-222/Cys-278. Positions 202 to 293 (EPPLVRVNRK…GVHMVLQVPQ (92 aa)) are alpha-3. The region spanning 203–282 (PPLVRVNRKE…SNLYSCHVEH (80 aa)) is the Ig-like C1-type domain. Positions 294 to 302 (ESEAIPLVM) are connecting peptide. The helical transmembrane segment at 303 to 323 (KAVSGSIVFVIVLTGVGVLVW) threads the bilayer. Over 324–340 (RRRPREQNGAVYLPTPD) the chain is Cytoplasmic.

It belongs to the MHC class I family. In terms of assembly, heterotrimer that consists of MR1, B2M and metabolite antigen. Major classes of metabolite ligands presented by MR1 include riboflavin-related antigens, pyrimidines and ribityl lumazines, nucleobase adducts and folate derivatives. Forms reversible covalent Schiff base complexes with microbial pyrimidine-based metabolite, which serves as a molecular switch triggering complete folding, stable association with B2M and translocation of the ternary complex from endoplasmic reticulum to the plasma membrane. Alternatively, forms non-Schiff base complexes with ribityl lumazines. On antigen-presenting cells, the ternary complex interacts with TCR on MR1-restricted T cells. Interacts with TAPBP and TAPBPL chaperones in the endoplasmic reticulum. TAPBP associated or not with MHC class I peptide loading complex binds ligand-free MR1 or MR1-B2M complex, providing for stable MR1 pools ready for metabolite antigen processing. TAPBPL interacts with MR1 in a ligand-independent way; this interaction may stabilize MR1 pool and facilitate ligand loading and dissociation. Structurally, MR1-B2M heterodimer adopts a topology similar to classical MHC class I molecules, with alpha-1 and alpha-2 domains of MR1 forming the antigen-binding cleft composed of two alpha-helices resting on a floor of 7-stranded anti-parallel beta-pleated sheet. MR1-B2M heterodimer (via alpha-helices) interacts with TCR (via CDR domains). In terms of processing, N-glycosylated.

The protein localises to the cell membrane. The protein resides in the endoplasmic reticulum membrane. Its subcellular location is the golgi apparatus membrane. It is found in the early endosome membrane. It localises to the late endosome membrane. In terms of biological role, antigen-presenting molecule specialized in displaying microbial pyrimidine-based metabolites to alpha-beta T cell receptors (TCR) on innate-type mucosal-associated invariant T (MAIT) cells. In complex with B2M preferentially presents riboflavin-derived metabolites to semi-invariant TCRs on MAIT cells, guiding immune surveillance of the microbial metabolome at mucosal epithelial barriers. Signature pyrimidine-based microbial antigens are generated via non-enzymatic condensation of metabolite intermediates of the riboflavin pathway with by-products arising from other metabolic pathways such as glycolysis. Typical potent antigenic metabolites are 5-(2-oxoethylideneamino)-6-D-ribitylaminouracil (5-OE-RU) and 5-(2-oxopropylideneamino)-6-D-ribitylaminouracil (5-OP-RU), products of condensation of 5-amino-6-D-ribityaminouracil (5-A-RU) with glyoxal or methylglyoxal by-products, respectively. May present microbial antigens to various MAIT cell subsets, providing for unique recognition of diverse microbes, including pathogens that do not synthesize riboflavin. Upon antigen recognition, elicits rapid innate-type MAIT cell activation to eliminate pathogenic microbes by directly killing infected cells. During T cell development, drives thymic selection and post-thymic terminal differentiation of MAIT cells in a process dependent on commensal microflora. Acts as an immune sensor of cancer cell metabolome. May present a tumor-specific or -associated metabolite essential for cancer cell survival to a pan-cancer TCR on a non-MAIT CD8-positive T cell clone, triggering T cell-mediated killing of a wide range of cancer cell types. May present tumor-enriched pyridoxal and pyridoxal 5'-phosphate antigens, enabling preferential recognition of cancer cells. Presents nucleobase carbonyl adducts generated during oxidative stress. Captures M3Ade, a nucleobase adduct composed of one adenine modified by a malondialdehyde trimer, for recognition by MR1-restricted T cell clones expressing a polyclonal TCR repertoire. This Pongo pygmaeus (Bornean orangutan) protein is Major histocompatibility complex class I-related gene protein.